Reading from the N-terminus, the 222-residue chain is Cytidylate kinase (222 aa).

11-19 (GPSGSGKST) is an ATP binding site.

It belongs to the cytidylate kinase family. Type 1 subfamily.

It is found in the cytoplasm. The catalysed reaction is CMP + ATP = CDP + ADP. It carries out the reaction dCMP + ATP = dCDP + ADP. In Ureaplasma urealyticum serovar 10 (strain ATCC 33699 / Western), this protein is Cytidylate kinase.